The following is a 542-amino-acid chain: Monocarboxylate transporter 3 (542 aa).

At 1–19 (MGRADPEEGQLPAPVKPPD) the chain is on the cytoplasmic side. A helical transmembrane segment spans residues 20–40 (GGWGWIVLFGCFVITGFSYAF). Over 41–63 (PKAVSVYFKELMKDFHVGYSDTA) the chain is Extracellular. The chain crosses the membrane as a helical span at residues 64–84 (WISSIMLAMLYGTGPVCSIMV). The Cytoplasmic segment spans residues 85–93 (NQFGCRPVM). The helical transmembrane segment at 94–114 (LIGGLLASSGMILASFTTNII) threads the bilayer. Residues 115–119 (ELYLT) lie on the Extracellular side of the membrane. A helical transmembrane segment spans residues 120–140 (AGVLTGLGMALNFQPSLIMLG). At 141-152 (TYFDKRRPLANG) the chain is on the cytoplasmic side. A helical membrane pass occupies residues 153 to 173 (LAAAGSPVFLSSLSPLGQVLL). Over 174 to 181 (EKFGWRGG) the chain is Extracellular. The helical transmembrane segment at 182–202 (FLIMGGLLLNCCTCGAVMRPL) threads the bilayer. At 203–265 (DAGMKRKTEK…LDFSIFSNRG (63 aa)) the chain is on the cytoplasmic side. Positions 226 to 247 (GGKSEEGISTTDGTKKTKKAKK) are disordered. Residues 266–286 (FIIYTISKFILVLGLFVPPIL) traverse the membrane as a helical segment. Topologically, residues 287–301 (LVNYAKDTGVPDTEA) are extracellular. A helical membrane pass occupies residues 302-322 (AFLLSIIGFIDIFARPACGMV). At 323 to 330 (AGLKWVRP) the chain is on the cytoplasmic side. The chain crosses the membrane as a helical span at residues 331–351 (HVAYLFSFAMLFNGLTDICSA). Residues 352–357 (RASNYT) lie on the Extracellular side of the membrane. Residues 358-378 (GLVIFCVFFGISYGMVGALQF) traverse the membrane as a helical segment. Residues 379–392 (EVLMAIVGSQKFSS) lie on the Cytoplasmic side of the membrane. Residues 393 to 413 (AIGLVLLIEAFAVLIGPPSAG) traverse the membrane as a helical segment. Residues 414-423 (RLVDALKNYE) are Extracellular-facing. The helical transmembrane segment at 424–444 (VIFYLAGSEVVLSALFLAMAT) threads the bilayer. The Cytoplasmic segment spans residues 445 to 542 (YCCLNRGKKT…ADQTVERDSF (98 aa)). The segment at 453–542 (KTPPPEKNPS…ADQTVERDSF (90 aa)) is disordered. Basolateral sorting signal stretches follow at residues 465-510 (GGSD…VEDE) and 511-532 (QSGEGGRCPEADGEVSSRAGCN). The span at 468 to 478 (DTEEAESDVQE) shows a compositional bias: acidic residues.

It belongs to the major facilitator superfamily. Monocarboxylate porter (TC 2.A.1.13) family. As to expression, retinal pigment epithelium.

The protein resides in the basolateral cell membrane. The enzyme catalyses (S)-lactate(in) + H(+)(in) = (S)-lactate(out) + H(+)(out). In terms of biological role, probable retinal pigment epithelium (RPE)-specific proton-coupled L-lactate transporter. May facilitate transport of lactate and H(+) out of the retina and could therefore play a role in pH and ion homeostasis of the outer retina. The chain is Monocarboxylate transporter 3 (SLC16A8) from Gallus gallus (Chicken).